A 398-amino-acid polypeptide reads, in one-letter code: 1-deoxy-D-xylulose 5-phosphate reductoisomerase (398 aa).

NADPH is bound by residues Thr-10, Gly-11, Ser-12, Ile-13, Gly-36, Lys-37, Asn-38, and Asn-124. Lys-125 is a 1-deoxy-D-xylulose 5-phosphate binding site. An NADPH-binding site is contributed by Glu-126. Asp-150 serves as a coordination point for Mn(2+). 4 residues coordinate 1-deoxy-D-xylulose 5-phosphate: Ser-151, Glu-152, Ser-186, and His-209. Glu-152 is a Mn(2+) binding site. Gly-215 provides a ligand contact to NADPH. The 1-deoxy-D-xylulose 5-phosphate site is built by Ser-222, Asn-227, Lys-228, and Glu-231. Glu-231 is a Mn(2+) binding site.

The protein belongs to the DXR family. In terms of assembly, homodimer. The cofactor is Mg(2+). Requires Mn(2+) as cofactor.

The enzyme catalyses 2-C-methyl-D-erythritol 4-phosphate + NADP(+) = 1-deoxy-D-xylulose 5-phosphate + NADPH + H(+). Its pathway is isoprenoid biosynthesis; isopentenyl diphosphate biosynthesis via DXP pathway; isopentenyl diphosphate from 1-deoxy-D-xylulose 5-phosphate: step 1/6. Functionally, catalyzes the NADPH-dependent rearrangement and reduction of 1-deoxy-D-xylulose-5-phosphate (DXP) to 2-C-methyl-D-erythritol 4-phosphate (MEP). The sequence is that of 1-deoxy-D-xylulose 5-phosphate reductoisomerase from Shigella flexneri.